We begin with the raw amino-acid sequence, 503 residues long: MPNVAETERSNDSGNGEHKSERKSPEENLQGAVKSFCTSASGAPLGPKGDGHYPWSCPVTHTREKIYAICSDYAFLNQATSIYKTPNPSRSPCLPDSTSLSAGNNSSRYIGIPTSTSEIIYNEENSLENLSNSLGKLPLAWEIDKSEFDGVTTNSKHKSGNAKKQVSKRKTSDKKGRYQKECPQHSPLEDIKQRKVLDLRRWYCISRPQYKTSCGISSLISCWNFLYSTMGAGNLPPITQEEALHILGFQPPFEDIRFGPFTGNTTLMRWFRQINDHFHVKGCSYVLYKPHGKNKTAGETASGALSKLTRGLKDESLAYIYHCQNHYFCPIGFEATPVKANKAFSRGPLSPQEVEYWILIGESSRKHPAIHCKKWADIVTDLNTQNPEYLDIRHLERGLQYRKTKKVGGNLHCIIAFQRLNWQRFGLWNFPFGTIRQESQPPTHAQGIAKSESEDNISKKQHGRLGRSFSASFHQDSAWKKMSSIHERRNSGYQGYSDYDGND.

Positions 1–26 (MPNVAETERSNDSGNGEHKSERKSPE) are enriched in basic and acidic residues. Disordered stretches follow at residues 1 to 33 (MPNVAETERSNDSGNGEHKSERKSPEENLQGAV), 152 to 184 (TTNSKHKSGNAKKQVSKRKTSDKKGRYQKECPQ), and 438 to 469 (ESQPPTHAQGIAKSESEDNISKKQHGRLGRSF). Residues 155-172 (SKHKSGNAKKQVSKRKTS) are compositionally biased toward basic residues. A compositionally biased stretch (basic and acidic residues) spans 173–184 (DKKGRYQKECPQ).

Belongs to the BIVM family. As to expression, widely expressed. Expressed at higher level in spleen, ovary, small intestine, colon, peripheral blood leukocytes and liver. Also expressed in testis, ovary, aorta, appendix, trachea, pituitary gland, bladder, uterus, spinal cord, salivary gland, stomach, mammary gland and bone marrow. Weakly or not expressed in fetal spleen, adult thymus and certain cancer cell lines.

Its subcellular location is the cytoplasm. It is found in the nucleus. In Homo sapiens (Human), this protein is Basic immunoglobulin-like variable motif-containing protein (BIVM).